The sequence spans 70 residues: Small ribosomal subunit protein bS21 (70 aa).

Basic residues predominate over residues 48-61 (KLAAAVKRQSKRLR). Positions 48–70 (KLAAAVKRQSKRLRSQQLPPKMY) are disordered.

It belongs to the bacterial ribosomal protein bS21 family.

This is Small ribosomal subunit protein bS21 from Thiobacillus denitrificans (strain ATCC 25259 / T1).